The primary structure comprises 364 residues: Polygalacturonase (364 aa).

Positions 1–21 (MVAYALTSMLLSAGALVAAAP) are cleaved as a signal peptide. A propeptide spanning residues 22 to 27 (SGLDAR) is cleaved from the precursor. Cysteines 30 and 45 form a disulfide. PbH1 repeat units follow at residues 158 to 188 (VTGLTLDRITIDNSAGDSAGAHNTDAFDIGS), 189 to 210 (SSGITISNANIKNQDDCVAINS), 211 to 231 (GSDIHVTNCQCSGGHGVSIGS), 240 to 261 (VKGVVVSGTTIANSDNGVRIKT), 269 to 291 (VSDITYENITLKNIAKYGIVIEQ), and 303 to 348 (TTGV…SITG). Asp203 serves as the catalytic Proton donor. A disulfide bridge links Cys205 with Cys221. His225 is an active-site residue. The N-linked (GlcNAc...) asparagine glycan is linked to Asn276. Cys331 and Cys336 are joined by a disulfide. A glycan (N-linked (GlcNAc...) asparagine) is linked at Asn340. A disulfide bridge connects residues Cys355 and Cys364.

This sequence belongs to the glycosyl hydrolase 28 family.

It is found in the secreted. It catalyses the reaction (1,4-alpha-D-galacturonosyl)n+m + H2O = (1,4-alpha-D-galacturonosyl)n + (1,4-alpha-D-galacturonosyl)m.. In terms of biological role, involved in maceration and soft-rotting of plant tissue. Hydrolyzes the 1,4-alpha glycosidic bonds of de-esterified pectate in the smooth region of the plant cell wall. This is Polygalacturonase (PGN1) from Cochliobolus carbonum (Maize leaf spot fungus).